The chain runs to 325 residues: MILDSTVNMLAQKILDEGPQALSFQEACSLTELPARSIPDLFLAACKIRQHYQKDDVVLCSILNAKSGACAENCAFCSQSGHHRTDVVKRPLLSAEAMIEEARRLDSAGATRFSMVTSGSRLNAAEIETVGQAASAITKSTRLTVCASLGQLTASSAERLKAGGVSVYHHNLETARSFFPQICTTHDYEEDIETLLIARKAGLRLCSGGIFGLGESWEQRVEMAFTLRELDVDSIPINFLNPLPGTRMADRSLLPPMEALQVIALYRFIHPAKPLLICGGREITLRDFQSWIFLAGASGMIVGNYLTTQGRDIGMDRDMIQSGLF.

In terms of domain architecture, Radical SAM core spans 52–281 (YQKDDVVLCS…AKPLLICGGR (230 aa)). Cys70, Cys74, and Cys77 together coordinate [4Fe-4S] cluster. [2Fe-2S] cluster contacts are provided by Ser114, Cys146, and Cys206.

Belongs to the radical SAM superfamily. Biotin synthase family. Homodimer. Requires [4Fe-4S] cluster as cofactor. [2Fe-2S] cluster is required as a cofactor.

It catalyses the reaction (4R,5S)-dethiobiotin + (sulfur carrier)-SH + 2 reduced [2Fe-2S]-[ferredoxin] + 2 S-adenosyl-L-methionine = (sulfur carrier)-H + biotin + 2 5'-deoxyadenosine + 2 L-methionine + 2 oxidized [2Fe-2S]-[ferredoxin]. The protein operates within cofactor biosynthesis; biotin biosynthesis; biotin from 7,8-diaminononanoate: step 2/2. Catalyzes the conversion of dethiobiotin (DTB) to biotin by the insertion of a sulfur atom into dethiobiotin via a radical-based mechanism. In Syntrophus aciditrophicus (strain SB), this protein is Biotin synthase.